The primary structure comprises 431 residues: Serine--tRNA ligase (431 aa).

237 to 239 (TAE) is a binding site for L-serine. 268–270 (RSE) is an ATP binding site. Glutamate 291 provides a ligand contact to L-serine. 355 to 358 (EISS) contributes to the ATP binding site. An L-serine-binding site is contributed by serine 390.

The protein belongs to the class-II aminoacyl-tRNA synthetase family. Type-1 seryl-tRNA synthetase subfamily. As to quaternary structure, homodimer. The tRNA molecule binds across the dimer.

The protein localises to the cytoplasm. The catalysed reaction is tRNA(Ser) + L-serine + ATP = L-seryl-tRNA(Ser) + AMP + diphosphate + H(+). The enzyme catalyses tRNA(Sec) + L-serine + ATP = L-seryl-tRNA(Sec) + AMP + diphosphate + H(+). Its pathway is aminoacyl-tRNA biosynthesis; selenocysteinyl-tRNA(Sec) biosynthesis; L-seryl-tRNA(Sec) from L-serine and tRNA(Sec): step 1/1. Its function is as follows. Catalyzes the attachment of serine to tRNA(Ser). Is also able to aminoacylate tRNA(Sec) with serine, to form the misacylated tRNA L-seryl-tRNA(Sec), which will be further converted into selenocysteinyl-tRNA(Sec). The polypeptide is Serine--tRNA ligase (Neisseria meningitidis serogroup A / serotype 4A (strain DSM 15465 / Z2491)).